The primary structure comprises 640 residues: RNA polymerase II elongation factor ELL2 (640 aa).

Disordered regions lie at residues 172–202, 290–320, and 343–490; these read AVSD…STIS, KLNP…PQKR, and RVPP…EEDL. Polar residues-rich tracts occupy residues 184–202 and 291–318; these read TPMN…STIS and LNPS…SSPQ. Low complexity predominate over residues 360-372; that stretch reads AAGLPLPPAAAAI. Positions 391 to 401 are enriched in polar residues; the sequence is IVNSNSNSPST. Residues 457–470 show a composition bias toward basic residues; that stretch reads MSHKKSKKKSKKHK. Basic and acidic residues predominate over residues 471–490; the sequence is EKDQIKKHDIETIEEKEEDL. Serine 503 and serine 580 each carry phosphoserine. Positions 526–636 constitute an OCEL domain; sequence PDYLIKYIAI…LIGEFDQQQA (111 aa).

The protein belongs to the ELL/occludin family. Component of the super elongation complex (SEC), at least composed of EAF1, EAF2, CDK9, MLLT3/AF9, AFF (AFF1 or AFF4), the P-TEFb complex and ELL (ELL, ELL2 or ELL3). Component of the little elongation complex (LEC), at least composed of ELL (ELL, ELL2 or ELL3), ZC3H8, ICE1 and ICE2. Interacts with AFF4; the interaction is direct and leads to stabilize ELL2 and prevent ELL2 ubiquitination. Interacts with EAF1 and EAF2. Ubiquitinated by SIAH1, leading to its degradation by the proteasome. Interaction with AFF4 stabilizes ELL2 and prevents ELL2 ubiquitination.

The protein localises to the nucleus. Elongation factor component of the super elongation complex (SEC), a complex required to increase the catalytic rate of RNA polymerase II transcription by suppressing transient pausing by the polymerase at multiple sites along the DNA. Component of the little elongation complex (LEC), a complex required to regulate small nuclear RNA (snRNA) gene transcription by RNA polymerase II and III. Plays a role in immunoglobulin secretion in plasma cells: directs efficient alternative mRNA processing, influencing both proximal poly(A) site choice and exon skipping, as well as immunoglobulin heavy chain (IgH) alternative processing. Probably acts by regulating histone modifications accompanying transition from membrane-specific to secretory IgH mRNA expression. This chain is RNA polymerase II elongation factor ELL2 (ELL2), found in Homo sapiens (Human).